Consider the following 329-residue polypeptide: Beta-ketoacyl-[acyl-carrier-protein] synthase III (329 aa).

Residues Cys-114 and His-255 contribute to the active site. The tract at residues 256-260 (QANQR) is ACP-binding. Asn-285 is an active-site residue.

This sequence belongs to the thiolase-like superfamily. FabH family. As to quaternary structure, homodimer.

The protein localises to the cytoplasm. The catalysed reaction is malonyl-[ACP] + acetyl-CoA + H(+) = 3-oxobutanoyl-[ACP] + CO2 + CoA. It participates in lipid metabolism; fatty acid biosynthesis. Functionally, catalyzes the condensation reaction of fatty acid synthesis by the addition to an acyl acceptor of two carbons from malonyl-ACP. Catalyzes the first condensation reaction which initiates fatty acid synthesis and may therefore play a role in governing the total rate of fatty acid production. Possesses both acetoacetyl-ACP synthase and acetyl transacylase activities. Its substrate specificity determines the biosynthesis of branched-chain and/or straight-chain of fatty acids. The chain is Beta-ketoacyl-[acyl-carrier-protein] synthase III from Trichodesmium erythraeum (strain IMS101).